Here is a 380-residue protein sequence, read N- to C-terminus: GPI-anchor transamidase (380 aa).

A signal peptide spans 1–19; the sequence is MIVQFVALLLLNLLQIIAA. The Lumenal portion of the chain corresponds to 20 to 354; it reads ESSHTNNWAV…TRELKYKKHP (335 aa). Catalysis depends on residues His145 and Cys187. Residue Asn307 is glycosylated (N-linked (GlcNAc...) asparagine). The helical transmembrane segment at 355–375 threads the bilayer; the sequence is ISRIISAVVCISFSIGFPYYA. The Cytoplasmic segment spans residues 376-380; that stretch reads SKYLK.

This sequence belongs to the peptidase C13 family. In terms of assembly, forms a complex with PIG-T homolog, PIG-U homolog and PIG-S homolog. In terms of processing, the disulfide bond between PIGK/GPI8 and PIGT is important for normal enzyme activity.

Its subcellular location is the endoplasmic reticulum membrane. The protein operates within glycolipid biosynthesis; glycosylphosphatidylinositol-anchor biosynthesis. In terms of biological role, mediates GPI anchoring in the endoplasmic reticulum, by replacing a protein's C-terminal GPI attachment signal peptide with a pre-assembled GPI. During this transamidation reaction, the GPI transamidase forms a carbonyl intermediate with the substrate protein. In Schizosaccharomyces pombe (strain 972 / ATCC 24843) (Fission yeast), this protein is GPI-anchor transamidase (gpi8).